Here is a 390-residue protein sequence, read N- to C-terminus: Curcumin synthase 3 (390 aa).

Cys164 is a catalytic residue.

This sequence belongs to the thiolase-like superfamily. Chalcone/stilbene synthases family. Homodimer.

It carries out the reaction (E)-feruloylacetyl-CoA + (E)-feruloyl-CoA + H2O = curcumin + CO2 + 2 CoA. The enzyme catalyses (E)-feruloylacetyl-CoA + (E)-4-coumaroyl-CoA + H2O = demethoxycurcumin + CO2 + 2 CoA. It catalyses the reaction (4-coumaroyl)acetyl-CoA + 4-coumaroyl-CoA + H2O = bisdemethoxycurcumin + CO2 + 2 CoA. Its pathway is secondary metabolite biosynthesis; flavonoid biosynthesis. Its function is as follows. Catalyzes the synthesis of curcumin by condensing feruloyl-CoA with a diketide-CoA in the curcuminoid biosynthesis. Also acts as a demethoxycurcumin synthase by accepting 4-coumaroyl-CoA as a starter substrate instead of feruloyl-CoA. The polypeptide is Curcumin synthase 3 (CURS3) (Curcuma longa (Turmeric)).